The following is a 342-amino-acid chain: Holliday junction branch migration complex subunit RuvB (342 aa).

Residues 1–179 (MTNILSPEKS…FGIPMRLNFY (179 aa)) are large ATPase domain (RuvB-L). Residues isoleucine 18, arginine 19, glycine 60, lysine 63, threonine 64, threonine 65, 126–128 (EDF), arginine 169, tyrosine 179, and arginine 216 contribute to the ATP site. Position 64 (threonine 64) interacts with Mg(2+). The tract at residues 180–250 (NTGELKKVLN…ISDFGLNRLE (71 aa)) is small ATPAse domain (RuvB-S). The tract at residues 253-342 (RIGLDSNDYR…HQFNIFNENE (90 aa)) is head domain (RuvB-H). The DNA site is built by arginine 289, arginine 308, and arginine 313.

Belongs to the RuvB family. In terms of assembly, homohexamer. Forms an RuvA(8)-RuvB(12)-Holliday junction (HJ) complex. HJ DNA is sandwiched between 2 RuvA tetramers; dsDNA enters through RuvA and exits via RuvB. An RuvB hexamer assembles on each DNA strand where it exits the tetramer. Each RuvB hexamer is contacted by two RuvA subunits (via domain III) on 2 adjacent RuvB subunits; this complex drives branch migration. In the full resolvosome a probable DNA-RuvA(4)-RuvB(12)-RuvC(2) complex forms which resolves the HJ.

It localises to the cytoplasm. The catalysed reaction is ATP + H2O = ADP + phosphate + H(+). Functionally, the RuvA-RuvB-RuvC complex processes Holliday junction (HJ) DNA during genetic recombination and DNA repair, while the RuvA-RuvB complex plays an important role in the rescue of blocked DNA replication forks via replication fork reversal (RFR). RuvA specifically binds to HJ cruciform DNA, conferring on it an open structure. The RuvB hexamer acts as an ATP-dependent pump, pulling dsDNA into and through the RuvAB complex. RuvB forms 2 homohexamers on either side of HJ DNA bound by 1 or 2 RuvA tetramers; 4 subunits per hexamer contact DNA at a time. Coordinated motions by a converter formed by DNA-disengaged RuvB subunits stimulates ATP hydrolysis and nucleotide exchange. Immobilization of the converter enables RuvB to convert the ATP-contained energy into a lever motion, pulling 2 nucleotides of DNA out of the RuvA tetramer per ATP hydrolyzed, thus driving DNA branch migration. The RuvB motors rotate together with the DNA substrate, which together with the progressing nucleotide cycle form the mechanistic basis for DNA recombination by continuous HJ branch migration. Branch migration allows RuvC to scan DNA until it finds its consensus sequence, where it cleaves and resolves cruciform DNA. The polypeptide is Holliday junction branch migration complex subunit RuvB (Rickettsia conorii (strain ATCC VR-613 / Malish 7)).